Consider the following 430-residue polypeptide: Enolase (430 aa).

Gln163 is a (2R)-2-phosphoglycerate binding site. Glu205 serves as the catalytic Proton donor. 3 residues coordinate Mg(2+): Asp242, Glu287, and Asp314. 4 residues coordinate (2R)-2-phosphoglycerate: Lys339, Arg368, Ser369, and Lys390. Lys339 serves as the catalytic Proton acceptor.

This sequence belongs to the enolase family. Requires Mg(2+) as cofactor.

The protein localises to the cytoplasm. Its subcellular location is the secreted. It is found in the cell surface. It carries out the reaction (2R)-2-phosphoglycerate = phosphoenolpyruvate + H2O. The protein operates within carbohydrate degradation; glycolysis; pyruvate from D-glyceraldehyde 3-phosphate: step 4/5. In terms of biological role, catalyzes the reversible conversion of 2-phosphoglycerate (2-PG) into phosphoenolpyruvate (PEP). It is essential for the degradation of carbohydrates via glycolysis. The chain is Enolase from Geobacillus kaustophilus (strain HTA426).